The following is an 85-amino-acid chain: U4-theraphotoxin-Hhn1h (85 aa).

An N-terminal signal peptide occupies residues 1–22 (MKVTLIAILTCAAVLVLHTTAA). A propeptide spanning residues 23-48 (EELEAESQLMEVGMPDTELAAVDEER) is cleaved from the precursor. 3 disulfide bridges follow: cysteine 52/cysteine 66, cysteine 56/cysteine 77, and cysteine 71/cysteine 82.

It belongs to the neurotoxin 12 (Hwtx-2) family. 02 (Hwtx-2) subfamily. In terms of tissue distribution, expressed by the venom gland.

The protein resides in the secreted. Functionally, postsynaptic neurotoxin. This chain is U4-theraphotoxin-Hhn1h, found in Cyriopagopus hainanus (Chinese bird spider).